Here is a 449-residue protein sequence, read N- to C-terminus: Biotin carboxylase (449 aa).

A Biotin carboxylation domain is found at 1-445; the sequence is MLEKVLIANR…NIHYLEKKLG (445 aa). ATP is bound by residues Lys116, Lys159, 165 to 166, 201 to 204, His209, and His236; these read GG and EKFL. An ATP-grasp domain is found at 120–317; sequence KDAMKRAGVP…IVKEMLRIAS (198 aa). Lys238 lines the hydrogencarbonate pocket. Glu276 and Glu288 together coordinate ATP. The Mg(2+) site is built by Glu276, Glu288, and Asn290. Mn(2+) contacts are provided by Glu276, Glu288, and Asn290. The hydrogencarbonate site is built by Arg292, Val295, and Arg338. Residue Arg292 is part of the active site. Biotin is bound at residue Arg338.

As to quaternary structure, acetyl-CoA carboxylase is a heterohexamer of biotin carboxyl carrier protein, biotin carboxylase and the two subunits of carboxyl transferase in a 2:2 complex. The cofactor is Mg(2+). Requires Mn(2+) as cofactor.

It catalyses the reaction N(6)-biotinyl-L-lysyl-[protein] + hydrogencarbonate + ATP = N(6)-carboxybiotinyl-L-lysyl-[protein] + ADP + phosphate + H(+). It functions in the pathway lipid metabolism; malonyl-CoA biosynthesis; malonyl-CoA from acetyl-CoA: step 1/1. In terms of biological role, this protein is a component of the acetyl coenzyme A carboxylase complex; first, biotin carboxylase catalyzes the carboxylation of the carrier protein and then the transcarboxylase transfers the carboxyl group to form malonyl-CoA. This chain is Biotin carboxylase (accC), found in Pseudomonas aeruginosa (strain ATCC 15692 / DSM 22644 / CIP 104116 / JCM 14847 / LMG 12228 / 1C / PRS 101 / PAO1).